Here is a 725-residue protein sequence, read N- to C-terminus: Beta-adducin (725 aa).

The segment at 1-22 is disordered; the sequence is MSEDTVPEAASPPPSQGQHYFD. Phosphoserine occurs at positions 11 and 25. The residue at position 55 (T55) is a Phosphothreonine. Residues S60 and S344 each carry the phosphoserine modification. The tract at residues 425–444 is interaction with calmodulin; sequence KQQKEKTRWLNTPNTYLRVN. The segment at 525–725 is disordered; the sequence is AEKSRSPSTE…KSKKKEKVES (201 aa). Phosphoserine occurs at positions 530 and 532. Position 533 is a phosphothreonine (T533). Phosphoserine is present on S535. T561 carries the phosphothreonine modification. The segment covering 566–589 has biased composition (basic and acidic residues); that stretch reads EEYKKEVERKKLEQEQEGEKDIAT. Residues S594, S598, S602, and S606 each carry the phosphoserine modification. A compositionally biased stretch (polar residues) spans 596-621; sequence VKSTPASPVQSPSKAGTKSPAVSPSK. T612 bears the Phosphothreonine mark. S614, S618, and S620 each carry phosphoserine. Over residues 622-631 the composition is skewed to basic and acidic residues; sequence TSEDTKKTEV. At T674 the chain carries Phosphothreonine. Phosphoserine is present on residues S678, S685, S688, S692, S696, S698, S700, S702, and S712. Over residues 687–700 the composition is skewed to low complexity; the sequence is TSGPLSPEGSPSKS. Positions 701 to 725 are enriched in basic residues; it reads PSKKKKKFRTPSFLKKSKKKEKVES. The interaction with calmodulin stretch occupies residues 703-720; it reads KKKKKFRTPSFLKKSKKK.

Belongs to the aldolase class II family. Adducin subfamily. As to quaternary structure, found in a complex with ADD2, DMTN and SLC2A1. Interacts with SLC2A1. Heterodimer of an alpha and a beta subunit.

The protein resides in the cytoplasm. It is found in the cytoskeleton. Its subcellular location is the cell membrane. In terms of biological role, membrane-cytoskeleton-associated protein that promotes the assembly of the spectrin-actin network. Binds to the erythrocyte membrane receptor SLC2A1/GLUT1 and may therefore provide a link between the spectrin cytoskeleton to the plasma membrane. Binds to calmodulin. Calmodulin binds preferentially to the beta subunit. This Mus musculus (Mouse) protein is Beta-adducin (Add2).